The sequence spans 129 residues: Small ribosomal subunit protein uS11 (129 aa).

This sequence belongs to the universal ribosomal protein uS11 family. As to quaternary structure, part of the 30S ribosomal subunit. Interacts with proteins S7 and S18. Binds to IF-3.

In terms of biological role, located on the platform of the 30S subunit, it bridges several disparate RNA helices of the 16S rRNA. Forms part of the Shine-Dalgarno cleft in the 70S ribosome. The chain is Small ribosomal subunit protein uS11 from Parabacteroides distasonis (strain ATCC 8503 / DSM 20701 / CIP 104284 / JCM 5825 / NCTC 11152).